Consider the following 663-residue polypeptide: Pescadillo homolog (663 aa).

The segment covering Q311 to E321 has biased composition (basic and acidic residues). Disordered regions lie at residues Q311–S360, T428–Q447, and A504–A663. The segment covering T322–K334 has biased composition (acidic residues). In terms of domain architecture, BRCT spans D361–P477. Residues P501–A663 are a coiled coil. The segment covering D526 to E567 has biased composition (acidic residues). Positions V591–K620 are enriched in basic and acidic residues.

It belongs to the pescadillo family. Component of the NOP7 complex, composed of erb1, nop7 and ytm1. The complex is held together by erb1, which interacts with nop7 via its N-terminal domain and with ytm1 via a high-affinity interaction between the seven-bladed beta-propeller domains of the 2 proteins. The NOP7 complex associates with the 66S pre-ribosome.

The protein localises to the nucleus. The protein resides in the nucleolus. It localises to the nucleoplasm. Functionally, component of the NOP7 complex, which is required for maturation of the 25S and 5.8S ribosomal RNAs and formation of the 60S ribosome. The chain is Pescadillo homolog (nop7) from Neurospora crassa (strain ATCC 24698 / 74-OR23-1A / CBS 708.71 / DSM 1257 / FGSC 987).